Reading from the N-terminus, the 72-residue chain is Exodeoxyribonuclease 7 small subunit (72 aa).

This sequence belongs to the XseB family. Heterooligomer composed of large and small subunits.

The protein localises to the cytoplasm. The catalysed reaction is Exonucleolytic cleavage in either 5'- to 3'- or 3'- to 5'-direction to yield nucleoside 5'-phosphates.. Functionally, bidirectionally degrades single-stranded DNA into large acid-insoluble oligonucleotides, which are then degraded further into small acid-soluble oligonucleotides. This is Exodeoxyribonuclease 7 small subunit from Chlamydia trachomatis serovar D (strain ATCC VR-885 / DSM 19411 / UW-3/Cx).